The chain runs to 456 residues: Bifunctional protein GlmU (456 aa).

A pyrophosphorylase region spans residues 1-229 (MSTSPLSVVI…LSEVEGVNNR (229 aa)). UDP-N-acetyl-alpha-D-glucosamine is bound by residues 11–14 (LAAG), lysine 25, glutamine 76, 81–82 (GT), 103–105 (YGD), glycine 140, glutamate 154, asparagine 169, and asparagine 227. Aspartate 105 contributes to the Mg(2+) binding site. A Mg(2+)-binding site is contributed by asparagine 227. Positions 230-250 (LQLSALERAYQQQQAQRLLLA) are linker. Residues 251–456 (GVMLTDPARF…SGWERPVKKK (206 aa)) are N-acetyltransferase. 2 residues coordinate UDP-N-acetyl-alpha-D-glucosamine: arginine 333 and lysine 351. Histidine 363 (proton acceptor) is an active-site residue. Positions 366 and 377 each coordinate UDP-N-acetyl-alpha-D-glucosamine. Residues alanine 380, 386–387 (NY), serine 405, alanine 423, and arginine 440 each bind acetyl-CoA.

It in the N-terminal section; belongs to the N-acetylglucosamine-1-phosphate uridyltransferase family. The protein in the C-terminal section; belongs to the transferase hexapeptide repeat family. As to quaternary structure, homotrimer. It depends on Mg(2+) as a cofactor.

The protein resides in the cytoplasm. It carries out the reaction alpha-D-glucosamine 1-phosphate + acetyl-CoA = N-acetyl-alpha-D-glucosamine 1-phosphate + CoA + H(+). It catalyses the reaction N-acetyl-alpha-D-glucosamine 1-phosphate + UTP + H(+) = UDP-N-acetyl-alpha-D-glucosamine + diphosphate. The protein operates within nucleotide-sugar biosynthesis; UDP-N-acetyl-alpha-D-glucosamine biosynthesis; N-acetyl-alpha-D-glucosamine 1-phosphate from alpha-D-glucosamine 6-phosphate (route II): step 2/2. It participates in nucleotide-sugar biosynthesis; UDP-N-acetyl-alpha-D-glucosamine biosynthesis; UDP-N-acetyl-alpha-D-glucosamine from N-acetyl-alpha-D-glucosamine 1-phosphate: step 1/1. It functions in the pathway bacterial outer membrane biogenesis; LPS lipid A biosynthesis. Functionally, catalyzes the last two sequential reactions in the de novo biosynthetic pathway for UDP-N-acetylglucosamine (UDP-GlcNAc). The C-terminal domain catalyzes the transfer of acetyl group from acetyl coenzyme A to glucosamine-1-phosphate (GlcN-1-P) to produce N-acetylglucosamine-1-phosphate (GlcNAc-1-P), which is converted into UDP-GlcNAc by the transfer of uridine 5-monophosphate (from uridine 5-triphosphate), a reaction catalyzed by the N-terminal domain. The protein is Bifunctional protein GlmU of Edwardsiella ictaluri (strain 93-146).